The chain runs to 168 residues: Mitochondrial inner membrane protein SHH4 (168 aa).

Residues 1–23 constitute a mitochondrion transit peptide; sequence MSSTKFLKPLCRIRAFHTSIARS. Residues 24–65 are Mitochondrial matrix-facing; sequence FTIPFLPKIPQKPGGVSGTANDSSYMPPESRAQGSYHWIVER. Residues 66-86 form a helical membrane-spanning segment; the sequence is GLSLAVLPLIAVPLVTTGPIS. Residues 87-92 are Mitochondrial intermembrane-facing; it reads TFTDTF. Residues 93–113 traverse the membrane as a helical segment; that stretch reads LSLVLLGHCHIGFQSCIIDYI. Residue Cys-101 participates in heme binding. Tyr-112 is a binding site for a ubiquinone. Over 114–120 the chain is Mitochondrial matrix; the sequence is SERVYGK. The helical transmembrane segment at 121–141 threads the bilayer; it reads VHHYAMYLLSLGSFLSFVGIY. Residues 142 to 168 lie on the Mitochondrial intermembrane side of the membrane; it reads KLESQEAGLIASLKSLWDNKPVEKKRQ.

The protein belongs to the CybS family. As to quaternary structure, interacts with SDH3.

It is found in the mitochondrion inner membrane. Homolog of SDH4, but seems not to be a stoichiometric subunit of either the succinate dehydrogenase (SDH) complex or the mitochondrial inner membrane translocase TIM22 complex. The chain is Mitochondrial inner membrane protein SHH4 from Saccharomyces cerevisiae (strain ATCC 204508 / S288c) (Baker's yeast).